We begin with the raw amino-acid sequence, 45 residues long: Host translation inhibitor E66L (45 aa).

This sequence belongs to the asfivirus E66L family.

The protein resides in the host endoplasmic reticulum. Functionally, inhibits host protein translation, probably through the EIF2AK2/EIF2S1 signaling pathway. Promotes cell retention in the G0/G1 phase. This Ornithodoros (relapsing fever ticks) protein is Host translation inhibitor E66L.